Here is an 88-residue protein sequence, read N- to C-terminus: LYR motif-containing protein 2 (88 aa).

Residues 1–19 (MAASRLPPATLTLKQFMRR) constitute a mitochondrion transit peptide.

The protein belongs to the complex I LYR family.

The protein localises to the mitochondrion. In terms of biological role, involved in efficient integration of the N-module into mitochondrial respiratory chain complex I. This Rattus norvegicus (Rat) protein is LYR motif-containing protein 2 (Lyrm2).